Consider the following 425-residue polypeptide: Serine hydroxymethyltransferase (425 aa).

(6S)-5,6,7,8-tetrahydrofolate contacts are provided by residues Leu122 and 126–128 (GHL). Lys231 carries the post-translational modification N6-(pyridoxal phosphate)lysine. 355–357 (SPF) lines the (6S)-5,6,7,8-tetrahydrofolate pocket.

The protein belongs to the SHMT family. In terms of assembly, homodimer. Pyridoxal 5'-phosphate is required as a cofactor.

The protein resides in the cytoplasm. The catalysed reaction is (6R)-5,10-methylene-5,6,7,8-tetrahydrofolate + glycine + H2O = (6S)-5,6,7,8-tetrahydrofolate + L-serine. The protein operates within one-carbon metabolism; tetrahydrofolate interconversion. Its pathway is amino-acid biosynthesis; glycine biosynthesis; glycine from L-serine: step 1/1. Catalyzes the reversible interconversion of serine and glycine with tetrahydrofolate (THF) serving as the one-carbon carrier. This reaction serves as the major source of one-carbon groups required for the biosynthesis of purines, thymidylate, methionine, and other important biomolecules. Also exhibits THF-independent aldolase activity toward beta-hydroxyamino acids, producing glycine and aldehydes, via a retro-aldol mechanism. This chain is Serine hydroxymethyltransferase, found in Rippkaea orientalis (strain PCC 8801 / RF-1) (Cyanothece sp. (strain PCC 8801)).